Here is a 25-residue protein sequence, read N- to C-terminus: Defensin D3 (25 aa).

It belongs to the DEFL family. Group IV subfamily. As to expression, distributed in the epidermal cell layer of leaves and in the subepidermal layer region of stems. Not in roots.

It is found in the secreted. It localises to the cell wall. Functionally, antimicrobial peptide. Active against Fusarium spp., Gram-positive and Gram-negative bacterial pathogens. The polypeptide is Defensin D3 (Spinacia oleracea (Spinach)).